The primary structure comprises 276 residues: Carboxysome assembly protein CcmO (276 aa).

BMC domains are found at residues 16-100 (ALGV…AVLP) and 120-204 (AIGL…DSLP). Disordered stretches follow at residues 200 to 219 (MDSL…LQLP) and 252 to 276 (QSAL…RDDQ).

It belongs to the bacterial microcompartments protein family. As to quaternary structure, homooligomerizes, possibly as a trimer, interacts with CcmK2 in the carboxysome.

The protein resides in the carboxysome. In terms of biological role, required for formation of the carboxysome, a polyhedral inclusion where RuBisCO (ribulose bisphosphate carboxylase, rbcL-rbcS) is sequestered. Required for recruitment of major shell protein CcmK2 to the pre-carboxysome. Suggested to be a carboxysome shell protein, but it is not detected in gels, mass spectrometry or by protein sequencing. Beta-carboxysome assembly initiates when soluble RuBisCO is condensed into a liquid matrix in a pre-carboxysome by the RbcS-like domains of probably both CcmM58 and CcmM35. CcmN interacts with the N-terminus of CcmM58, and then recruits the CcmK2 major shell protein via CcmN's encapsulation peptide. Shell formation requires CcmK proteins and CcmO. CcmL caps the otherwise elongated carboxysome. Once fully encapsulated carboxysomes are formed, they migrate within the cell probably via interactions with the cytoskeleton. The sequence is that of Carboxysome assembly protein CcmO from Synechococcus elongatus (strain ATCC 33912 / PCC 7942 / FACHB-805) (Anacystis nidulans R2).